Consider the following 381-residue polypeptide: MTATHTHSNGSNDFTPVSINDHVHRRFNPLLGKHVLVSPHRSLRPWNGQKETPAIPVETPHDSKCYLCPGNKRTTGQHNPDYKGIYVFENDFPALLPDPLAVGTNKISDDPLFQSEPVRGRCKVICFHPRHDLTMAAMRISEINHVLDGWKDVYAEEGKIMQEESSDGCVQIFENRGAMMGCSAPHPHGQVWTTSFVPDEPATEIENFVRYASGRSGSHMLLDYALREVKARERVVTLHESGWVAVVPYWAAWPFEILLMPYKRHIPSILQLTAEEQTGLATILKDVLSRYDNLFSCPFPYSMGLHQSPLPPTDPTSNSAQVHFHFYPPLLRSATVRKFMVGFELLGEAQRDIVPEQAAVRLRESLPHKRATLSNDKPYNP.

Zn(2+)-binding residues include Cys-65 and Cys-68. Position 90 to 91 (90 to 91 (ND)) interacts with UDP-alpha-D-glucose. His-131 serves as a coordination point for Zn(2+). A UDP-alpha-D-glucose-binding site is contributed by Asn-175. His-186 contributes to the Zn(2+) binding site. The active-site Tele-UMP-histidine intermediate is His-188. Gln-190 lines the UDP-alpha-D-glucose pocket. 4 residues coordinate Fe cation: Glu-204, His-306, His-323, and His-325. Residues 338 to 341 (KFMV) and 343 to 344 (FE) contribute to the UDP-alpha-D-glucose site.

Belongs to the galactose-1-phosphate uridylyltransferase type 1 family. Homodimer. The cofactor is Zn(2+).

The catalysed reaction is alpha-D-galactose 1-phosphate + UDP-alpha-D-glucose = alpha-D-glucose 1-phosphate + UDP-alpha-D-galactose. It participates in carbohydrate metabolism; galactose metabolism. The protein is Galactose-1-phosphate uridylyltransferase (GAL7) of Cryptococcus neoformans var. neoformans serotype D (strain B-3501A) (Filobasidiella neoformans).